A 288-amino-acid chain; its full sequence is Alpha/beta hydrolase domain-containing protein 17B (288 aa).

Residues Ser-170, Asp-235, and His-264 each act as charge relay system in the active site.

It belongs to the AB hydrolase superfamily. ABHD17 family. Palmitoylated on cysteine residues located in a cysteine cluster at the N-terminus which promotes membrane localization.

Its subcellular location is the cell membrane. The protein localises to the recycling endosome membrane. It localises to the cell projection. It is found in the dendritic spine. The protein resides in the postsynaptic density membrane. The catalysed reaction is S-hexadecanoyl-L-cysteinyl-[protein] + H2O = L-cysteinyl-[protein] + hexadecanoate + H(+). Hydrolyzes fatty acids from S-acylated cysteine residues in proteins. Has depalmitoylating activity towards NRAS. The protein is Alpha/beta hydrolase domain-containing protein 17B of Gallus gallus (Chicken).